The primary structure comprises 871 residues: Tegument protein UL47 homolog (871 aa).

The interval 1–212 (MDQHHGARGG…DEDDMEVIRD (212 aa)) is disordered. The Nuclear localization signal motif lies at 13–33 (IRRPRRSIESRSHPFRATGNT). Composition is skewed to polar residues over residues 30 to 41 (TGNTQRTYSTPR) and 59 to 81 (EQAS…STSF). Acidic residues-rich tracts occupy residues 114–134 (SSSE…EEDQ), 146–155 (SSDENDEEED), and 185–207 (SESE…EDDM).

This sequence belongs to the alphaherpesvirinae HHV-1 UL47 family. Interacts with US3 kinase. Interacts with UL31 and UL34; these interactions seem important for efficient virion nuclear egress. Interacts with UL41/VHS. In terms of processing, phosphorylated by US3. This phosphorylation is required for proper nuclear localization.

The protein localises to the virion tegument. It is found in the host nucleus. Its subcellular location is the host cytoplasm. Tegument protein that can bind to various RNA transcripts. Plays a role in the attenuation of selective viral and cellular mRNA degradation by modulating the activity of host shutoff RNase UL41/VHS. Also plays a role in the primary envelopment of virions in the perinuclear space, probably by interacting with two nuclear egress proteins UL31 and UL34. This is Tegument protein UL47 homolog from Equus caballus (Horse).